Reading from the N-terminus, the 277-residue chain is UBX domain-containing protein 8 (277 aa).

Residue Met-1 is a topological domain, cytoplasmic. A helical membrane pass occupies residues 2 to 22; sequence ASRGVVGLFLLSALPLLCLEL. Over 23 to 33 the chain is Lumenal; sequence RRGIPSLGIKD. A helical membrane pass occupies residues 34 to 54; that stretch reads LILLSGRIFLLLALLTLVISV. Topologically, residues 55–277 are cytoplasmic; sequence TTSWFNSLKP…NVEEKEQSSQ (223 aa). Residues 64–89 form a disordered region; that stretch reads PSQGHLKEGEKENEKRRRLVRERQQE. The span at 68 to 89 shows a compositional bias: basic and acidic residues; sequence HLKEGEKENEKRRRLVRERQQE. The UBX domain maps to 193-269; the sequence is TAEEVVTVAL…GITVDTVLNV (77 aa).

Interacts with SYVN1 and VCP. Highly expressed in gonads. In testis, expressed in post-meiotic round spermatids, while in ovaries it is expressed in granulosa cells.

It localises to the endoplasmic reticulum membrane. Functionally, involved in endoplasmic reticulum-associated degradation (ERAD) for misfolded lumenal proteins, possibly by tethering VCP to the endoplasmic reticulum membrane. May play a role in reproduction. The protein is UBX domain-containing protein 8 (Ubxn8) of Mus musculus (Mouse).